Reading from the N-terminus, the 575-residue chain is Dual specificity protein phosphatase YVH1 (575 aa).

Positions 185-213 (KHNNNNNNNNNNNNNNNNNNNNNNCCTFK) are disordered. A compositionally biased stretch (low complexity) spans 187 to 208 (NNNNNNNNNNNNNNNNNNNNNN). A Tyrosine-protein phosphatase domain is found at 283–435 (NYKINQEEDT…LLLYEKMNYT (153 aa)). The active-site Phosphocysteine intermediate is the Cys-379. Positions 476 and 530 each coordinate Zn(2+).

The protein belongs to the protein-tyrosine phosphatase family. Non-receptor class dual specificity subfamily. As to quaternary structure, interacts with PES. Zn(2+) serves as cofactor.

It localises to the cytoplasm. Its subcellular location is the nucleus. It catalyses the reaction O-phospho-L-tyrosyl-[protein] + H2O = L-tyrosyl-[protein] + phosphate. The enzyme catalyses O-phospho-L-seryl-[protein] + H2O = L-seryl-[protein] + phosphate. Dual specificity protein phosphatase which dephosphorylates both phosphotyrosine and phosphoserine residues. In Plasmodium falciparum (isolate 3D7), this protein is Dual specificity protein phosphatase YVH1.